Here is a 209-residue protein sequence, read N- to C-terminus: Small ribosomal subunit protein uS4 (209 aa).

The tract at residues 22-45 (RGRNPLLRKPNPPGQHGMQRKKKS) is disordered. One can recognise an S4 RNA-binding domain in the interval 93-154 (CRLDSIVYRL…KSKRLAIVTE (62 aa)).

Belongs to the universal ribosomal protein uS4 family. In terms of assembly, part of the 30S ribosomal subunit. Contacts protein S5. The interaction surface between S4 and S5 is involved in control of translational fidelity.

Its function is as follows. One of the primary rRNA binding proteins, it binds directly to 16S rRNA where it nucleates assembly of the body of the 30S subunit. With S5 and S12 plays an important role in translational accuracy. This Chlamydia trachomatis serovar L2 (strain ATCC VR-902B / DSM 19102 / 434/Bu) protein is Small ribosomal subunit protein uS4.